Here is a 369-residue protein sequence, read N- to C-terminus: Anhydro-N-acetylmuramic acid kinase (369 aa).

12–19 provides a ligand contact to ATP; that stretch reads GTSLDGVD.

Belongs to the anhydro-N-acetylmuramic acid kinase family.

It carries out the reaction 1,6-anhydro-N-acetyl-beta-muramate + ATP + H2O = N-acetyl-D-muramate 6-phosphate + ADP + H(+). The protein operates within amino-sugar metabolism; 1,6-anhydro-N-acetylmuramate degradation. It participates in cell wall biogenesis; peptidoglycan recycling. Its function is as follows. Catalyzes the specific phosphorylation of 1,6-anhydro-N-acetylmuramic acid (anhMurNAc) with the simultaneous cleavage of the 1,6-anhydro ring, generating MurNAc-6-P. Is required for the utilization of anhMurNAc either imported from the medium or derived from its own cell wall murein, and thus plays a role in cell wall recycling. This Escherichia coli O6:K15:H31 (strain 536 / UPEC) protein is Anhydro-N-acetylmuramic acid kinase.